The primary structure comprises 321 residues: Probable 3-hydroxyisobutyrate dehydrogenase, mitochondrial (321 aa).

NAD(+)-binding positions include 23 to 52, 86 to 87, and threonine 117; these read KTVGFIGLGNMGGHQAINLIKKGHNLIVFD and LP. Lysine 192 is a catalytic residue. Lysine 267 lines the NAD(+) pocket.

This sequence belongs to the HIBADH-related family. 3-hydroxyisobutyrate dehydrogenase subfamily.

Its subcellular location is the mitochondrion. The catalysed reaction is 3-hydroxy-2-methylpropanoate + NAD(+) = 2-methyl-3-oxopropanoate + NADH + H(+). Its pathway is amino-acid degradation; L-valine degradation. The protein is Probable 3-hydroxyisobutyrate dehydrogenase, mitochondrial (hibA) of Dictyostelium discoideum (Social amoeba).